The chain runs to 397 residues: Elongation factor Tu (397 aa).

One can recognise a tr-type G domain in the interval 10–206; that stretch reads KPHVNIGTIG…AVDEYIPTPE (197 aa). The tract at residues 19 to 26 is G1; it reads GHIDHGKT. 19–26 lines the GTP pocket; sequence GHIDHGKT. Thr-26 is a Mg(2+) binding site. Residues 62-66 form a G2 region; that stretch reads GITIS. The tract at residues 83 to 86 is G3; the sequence is DCPG. Residues 83-87 and 138-141 each bind GTP; these read DCPGH and NKCD. Positions 138-141 are G4; the sequence is NKCD. A G5 region spans residues 176–178; it reads AAF.

This sequence belongs to the TRAFAC class translation factor GTPase superfamily. Classic translation factor GTPase family. EF-Tu/EF-1A subfamily. As to quaternary structure, monomer.

The protein localises to the cytoplasm. The catalysed reaction is GTP + H2O = GDP + phosphate + H(+). Functionally, GTP hydrolase that promotes the GTP-dependent binding of aminoacyl-tRNA to the A-site of ribosomes during protein biosynthesis. The chain is Elongation factor Tu from Nocardioides sp. (strain ATCC BAA-499 / JS614).